We begin with the raw amino-acid sequence, 529 residues long: Bifunctional purine biosynthesis protein PurH (529 aa).

Positions 1–148 constitute an MGS-like domain; that stretch reads MNNARPIRRA…KNHKDVVIVV (148 aa).

It belongs to the PurH family.

The enzyme catalyses (6R)-10-formyltetrahydrofolate + 5-amino-1-(5-phospho-beta-D-ribosyl)imidazole-4-carboxamide = 5-formamido-1-(5-phospho-D-ribosyl)imidazole-4-carboxamide + (6S)-5,6,7,8-tetrahydrofolate. It carries out the reaction IMP + H2O = 5-formamido-1-(5-phospho-D-ribosyl)imidazole-4-carboxamide. It participates in purine metabolism; IMP biosynthesis via de novo pathway; 5-formamido-1-(5-phospho-D-ribosyl)imidazole-4-carboxamide from 5-amino-1-(5-phospho-D-ribosyl)imidazole-4-carboxamide (10-formyl THF route): step 1/1. The protein operates within purine metabolism; IMP biosynthesis via de novo pathway; IMP from 5-formamido-1-(5-phospho-D-ribosyl)imidazole-4-carboxamide: step 1/1. The protein is Bifunctional purine biosynthesis protein PurH of Shewanella amazonensis (strain ATCC BAA-1098 / SB2B).